The sequence spans 503 residues: ATP synthase subunit alpha (503 aa).

170–177 provides a ligand contact to ATP; that stretch reads GDRQTGKT.

Belongs to the ATPase alpha/beta chains family. As to quaternary structure, F-type ATPases have 2 components, CF(1) - the catalytic core - and CF(0) - the membrane proton channel. CF(1) has five subunits: alpha(3), beta(3), gamma(1), delta(1), epsilon(1). CF(0) has three main subunits: a(1), b(2) and c(9-12). The alpha and beta chains form an alternating ring which encloses part of the gamma chain. CF(1) is attached to CF(0) by a central stalk formed by the gamma and epsilon chains, while a peripheral stalk is formed by the delta and b chains.

Its subcellular location is the cell membrane. It catalyses the reaction ATP + H2O + 4 H(+)(in) = ADP + phosphate + 5 H(+)(out). Its function is as follows. Produces ATP from ADP in the presence of a proton gradient across the membrane. The alpha chain is a regulatory subunit. The sequence is that of ATP synthase subunit alpha from Brevibacillus brevis (strain 47 / JCM 6285 / NBRC 100599).